Consider the following 991-residue polypeptide: Gingipain R1 (991 aa).

A signal peptide spans 1 to 24 (MKNLNKFVSIALCSSLLGGMAFAQ). A propeptide spanning residues 25 to 227 (QTELGRNPNV…RMFMNYEPGR (203 aa)) is cleaved from the precursor. Residues Asp305, Val327, Asp330, Tyr332, Glu334, Glu388, and His393 each coordinate Ca(2+). The active-site Proton donor is the His438. Cys471 functions as the Nucleophile in the catalytic mechanism. Positions 476, 485, 519, 520, 523, and 529 each coordinate Ca(2+).

Belongs to the peptidase C25 family.

Its subcellular location is the secreted. The enzyme catalyses Hydrolysis of proteins and small molecule substrates, with a preference for Arg in P1.. Requires cysteine for activation and Ca(2+) and/or Mg(2+) for stabilization. It is stimulated by glycine-containing dipeptides. It is resistant to inhibition by proteinase inhibitors in human plasma. In terms of biological role, thiol protease. Acts synergistically with RgpB to catalyze the maturation of fimbrial subunits, such as FimA. Its proteolytic activity is a major factor in both periodontal tissue destruction and in evasion of host defense mechanisms. This Porphyromonas gingivalis (Bacteroides gingivalis) protein is Gingipain R1 (rgpA).